The following is a 167-amino-acid chain: uncharacterized protein (167 aa).

This is an uncharacterized protein from Escherichia coli (strain K12).